The primary structure comprises 326 residues: GTP 3',8-cyclase (326 aa).

The Radical SAM core domain occupies 7–232 (GFGRSFPYLR…PRAADAGPAR (226 aa)). GTP is bound at residue Arg16. 2 residues coordinate [4Fe-4S] cluster: Cys23 and Cys27. Residue Tyr29 coordinates S-adenosyl-L-methionine. Cys30 contacts [4Fe-4S] cluster. Position 65 (Arg65) interacts with GTP. Position 69 (Gly69) interacts with S-adenosyl-L-methionine. Thr96 provides a ligand contact to GTP. An S-adenosyl-L-methionine-binding site is contributed by Ser120. Residue Lys157 participates in GTP binding. Met191 is a binding site for S-adenosyl-L-methionine. The [4Fe-4S] cluster site is built by Cys254 and Cys257. 259–261 (RLR) contributes to the GTP binding site. Cys271 is a binding site for [4Fe-4S] cluster.

It belongs to the radical SAM superfamily. MoaA family. In terms of assembly, monomer and homodimer. It depends on [4Fe-4S] cluster as a cofactor.

The enzyme catalyses GTP + AH2 + S-adenosyl-L-methionine = (8S)-3',8-cyclo-7,8-dihydroguanosine 5'-triphosphate + 5'-deoxyadenosine + L-methionine + A + H(+). Its pathway is cofactor biosynthesis; molybdopterin biosynthesis. In terms of biological role, catalyzes the cyclization of GTP to (8S)-3',8-cyclo-7,8-dihydroguanosine 5'-triphosphate. The protein is GTP 3',8-cyclase of Stenotrophomonas maltophilia (strain K279a).